The primary structure comprises 293 residues: Cytidine deaminase 8 (293 aa).

CMP/dCMP-type deaminase domains lie at 20–151 and 181–293; these read FTPQ…LISQ and EHCN…LHCK. A substrate-binding site is contributed by 61-63; it reads NVE. His-74 provides a ligand contact to Zn(2+). The Proton donor role is filled by Glu-76. Residues Cys-107 and Cys-110 each coordinate Zn(2+).

This sequence belongs to the cytidine and deoxycytidylate deaminase family. As to quaternary structure, homodimer. Zn(2+) serves as cofactor.

It catalyses the reaction cytidine + H2O + H(+) = uridine + NH4(+). The enzyme catalyses 2'-deoxycytidine + H2O + H(+) = 2'-deoxyuridine + NH4(+). In terms of biological role, this enzyme scavenges exogenous and endogenous cytidine and 2'-deoxycytidine for UMP synthesis. In Arabidopsis thaliana (Mouse-ear cress), this protein is Cytidine deaminase 8 (CDA8).